The sequence spans 294 residues: Golgi phosphoprotein 3 homolog sauron (294 aa).

Positions 1–52 are disordered; that stretch reads MNRSDGLVRRSVKPRENGGAEGGLNANTPDDNQDALDNLKDQEDNIDDGDSK. Residues 37–52 show a composition bias toward basic and acidic residues; sequence DNLKDQEDNIDDGDSK. A 1,2-diacyl-sn-glycero-3-phospho-(1D-myo-inositol 4-phosphate) contacts are provided by tryptophan 77, arginine 86, lysine 167, and arginine 170. The tract at residues 186–197 is beta-hairpin required for oligomerization; that stretch reads EKQNFLLFDMTT.

The protein belongs to the GOLPH3/VPS74 family. As to quaternary structure, homooligomer. Interacts with botv, Ext2 and ttv. Interacts with Vti1. Interacts with Vps35, Rab5, Chc, Rab11, zip, Pav and Septin1.

The protein localises to the golgi apparatus membrane. It localises to the cytoplasmic vesicle. It is found in the cleavage furrow. Functionally, phosphatidylinositol-4-phosphate-binding protein that links Golgi membranes to the cytoskeleton and may participate in the tensile force required for vesicle budding from the Golgi. Thereby, may play a role in Golgi membrane trafficking and could indirectly give its flattened shape to the Golgi apparatus. May also bind to the coatomer to regulate Golgi membrane trafficking. May play a role in anterograde transport from the Golgi to the plasma membrane and regulate secretion. Also involved in the control of the localization of Golgi enzymes through interaction with their cytoplasmic part. Functions in cytokinesis by regulating contractile ring formation and vesicle trafficking during cleavage furrow ingression. May also have a role in the intital steps of central spindle formation. Can also bind phosphatidylinositol-3-phosphate and phosphatidylinositol-5-phosphate in vitro. The protein is Golgi phosphoprotein 3 homolog sauron of Drosophila melanogaster (Fruit fly).